Consider the following 391-residue polypeptide: MDKIGVLLMNLGGPERINDVGPFLYNLFSDPEIIRIPFPVFQKPLAWLISTLRSTTSQQAYLSIGGGSPIRRITEQQARELQSKLRDKGLNATTYIAMRYWHPFTESAIADMKADGIDQVVVIPLYPHFSISTSGSSFRELKKLRDSDDEFKKVPMRCVRSWYSQSDYLKSMVELISEQISLCESPSKAHIFFTAHGVPKSYVEEAGDPYKQQIEDCSLLIINELEKCLGHSNPHTLSYQSRVGPVEWLKPYTEEVLADLGRSNVNDLIVVPISFVGEHIETLQEIDIEYKEIAEQAGIKNFRRVKALNTHPTFIEGLSDLVISCLEGPLVNLEEASQLPEKVKLYPQEKWQWGWNNSSEVWNGRVAMIIFLVLFIELISGSGPLHKLGIL.

The Fe cation site is built by His196 and Glu281.

It belongs to the ferrochelatase family.

It is found in the cytoplasm. It catalyses the reaction heme b + 2 H(+) = protoporphyrin IX + Fe(2+). It participates in porphyrin-containing compound metabolism; protoheme biosynthesis; protoheme from protoporphyrin-IX: step 1/1. In terms of biological role, catalyzes the ferrous insertion into protoporphyrin IX. This chain is Ferrochelatase, found in Prochlorococcus marinus (strain MIT 9215).